The following is a 363-amino-acid chain: Spermidine/putrescine import ATP-binding protein PotA (363 aa).

The region spanning 6–236 is the ABC transporter domain; the sequence is VEFKNVIKKY…PINHFVADFI (231 aa). 38–45 serves as a coordination point for ATP; the sequence is GPSGCGKT.

This sequence belongs to the ABC transporter superfamily. Spermidine/putrescine importer (TC 3.A.1.11.1) family. The complex is composed of two ATP-binding proteins (PotA), two transmembrane proteins (PotB and PotC) and a solute-binding protein (PotD).

It is found in the cell membrane. It carries out the reaction ATP + H2O + polyamine-[polyamine-binding protein]Side 1 = ADP + phosphate + polyamineSide 2 + [polyamine-binding protein]Side 1.. Functionally, part of the ABC transporter complex PotABCD involved in spermidine/putrescine import. Responsible for energy coupling to the transport system. In Latilactobacillus sakei subsp. sakei (strain 23K) (Lactobacillus sakei subsp. sakei), this protein is Spermidine/putrescine import ATP-binding protein PotA.